Here is a 340-residue protein sequence, read N- to C-terminus: MAHVAEWKKKEVEELTKIIKSHPVIALVDVAGVPAYPLSKMRDKLRGKALLRVSRNTLIELAIKRAAQELNKPDLEKLADYIEGGAAILATEMNPFKLYKLLEESKTPAPAKPGAVVPKDVVIPAGPTSLAPGPLVGEMQALGIPARIEKGKVTIQKDYTVLKAGEVITEQLARILNALGIEPLEVGLNLLAAYEDDIIYTPDVLAIDEQEYINMLQQAYMHAFNLSVNTAYPTKQTIEAIIQKAYLGAKNVAVEAGYITPETVEDILGRAIRAFLLIAQNLPEELLDEKTKELLNAQAQVAVAAPQPAEEKVEEAEEEEEEEEEASEEEALAGLGALFG.

The segment at 305-340 (APQPAEEKVEEAEEEEEEEEEASEEEALAGLGALFG) is disordered. The span at 312–331 (KVEEAEEEEEEEEEASEEEA) shows a compositional bias: acidic residues.

Belongs to the universal ribosomal protein uL10 family. As to quaternary structure, part of the 50S ribosomal subunit. Forms part of the ribosomal stalk which helps the ribosome interact with GTP-bound translation factors. Forms a heptameric L10(L12)2(L12)2(L12)2 complex, where L10 forms an elongated spine to which the L12 dimers bind in a sequential fashion.

Its function is as follows. Forms part of the ribosomal stalk, playing a central role in the interaction of the ribosome with GTP-bound translation factors. The protein is Large ribosomal subunit protein uL10 of Thermococcus gammatolerans (strain DSM 15229 / JCM 11827 / EJ3).